Reading from the N-terminus, the 601-residue chain is Threonine dehydratase (601 aa).

Residues 1-51 (MEVLCQAPAGNSNFACNPKFTAIRTRAISSNDTFKVISSTGNNKKMKGAIR) constitute a chloroplast transit peptide. 2 consecutive ACT-like domains span residues 427–499 (ALLA…NLTN) and 521–592 (IFCQ…IESL).

This sequence belongs to the serine/threonine dehydratase family. Requires pyridoxal 5'-phosphate as cofactor.

Its subcellular location is the plastid. It localises to the chloroplast. It carries out the reaction L-threonine = 2-oxobutanoate + NH4(+). It participates in amino-acid biosynthesis; L-isoleucine biosynthesis; 2-oxobutanoate from L-threonine: step 1/1. In terms of biological role, catalyzes the conversion of threonine to alpha-keto butyrate in isoleucine (Ile) biosynthesis. Required for JA-Ile biosynthesis, a signaling molecule involved in defense and resistance to the herbivore Manduca sexta caterpillars. The protein is Threonine dehydratase of Nicotiana attenuata (Coyote tobacco).